The primary structure comprises 185 residues: Translation initiation factor IF-3 (185 aa).

The protein belongs to the IF-3 family. In terms of assembly, monomer.

The protein localises to the cytoplasm. Its function is as follows. IF-3 binds to the 30S ribosomal subunit and shifts the equilibrium between 70S ribosomes and their 50S and 30S subunits in favor of the free subunits, thus enhancing the availability of 30S subunits on which protein synthesis initiation begins. The sequence is that of Translation initiation factor IF-3 from Rickettsia felis (strain ATCC VR-1525 / URRWXCal2) (Rickettsia azadi).